The sequence spans 510 residues: MLPPLARIHSPADTIPVRHLHQSIGKSKKPITVVRWTPEGRRLLTGGHTGEFMLWNGTAFNFETVMDVRGQKGDIKYWRPNFNNVETIDDAHHDAVRDLAWSPSDTKFLSASDDTTLKIFDFTARTADTVLTGHNWDVKSCDWHPTKGLLVSGSKDHQVKFWDPRTARCLTTLHSHKNTVTTTRFSRVNSNLLATSSRDQTARVFDLRMMRDICILRGHEKPISSLTWHPIHSSLISTGSEDGSLYHYLLDEPNLPSGQVPTIAPYDSPDPANTPAQVIYPAHRIQYAHSATIWSLDWHPLGHILASGSKDNFTRFWSRARPGETSYMKDRFHIGEEAAEAQGTWSRGFGRRQMREEEEQEAQDEAESLVDQKNTTAQSLPGIQIAPPGLGSLQTGSGSLLPGIGAPQPAPQAGMSASMPQMDPGRLAAILSQQNPSQPQNFPSATGIPGFPMPPAMSGTPPLNIDLAELQKQLLSQGISPQNFASLAASLGSAGLPGLQSSTPDNTYRR.

WD repeat units lie at residues 26 to 65 (KSKK…FETV), 91 to 130 (AHHD…ADTV), 133 to 172 (GHNW…CLTT), 175 to 215 (SHKN…DICI), 218 to 258 (GHEK…LPSG), and 288 to 327 (AHSA…ETSY).

The protein resides in the nucleus. Required for 3'-end cleavage and polyadenylation of pre-mRNAs. Also involved in chromosome segregation where it has a role in chromosome attachment to the mitotic spindle. This Aspergillus fumigatus (strain ATCC MYA-4609 / CBS 101355 / FGSC A1100 / Af293) (Neosartorya fumigata) protein is Polyadenylation factor subunit 2 (pfs2).